Consider the following 68-residue polypeptide: Ribosome modulation factor (68 aa).

It belongs to the ribosome modulation factor family.

It is found in the cytoplasm. Functionally, during stationary phase, converts 70S ribosomes to an inactive dimeric form (100S ribosomes). This is Ribosome modulation factor from Saccharophagus degradans (strain 2-40 / ATCC 43961 / DSM 17024).